A 352-amino-acid polypeptide reads, in one-letter code: Molybdenum import ATP-binding protein ModC (352 aa).

The ABC transporter domain maps to 1–229; sequence MLELNFSQTL…SVMHPWLPKE (229 aa). 31-38 is an ATP binding site; it reads GVSGAGKT. A Mop domain is found at 289–352; sequence QTSIRNVLRA…AQVKSVSITA (64 aa).

The protein belongs to the ABC transporter superfamily. Molybdate importer (TC 3.A.1.8) family. As to quaternary structure, the complex is composed of two ATP-binding proteins (ModC), two transmembrane proteins (ModB) and a solute-binding protein (ModA).

The protein resides in the cell inner membrane. The enzyme catalyses molybdate(out) + ATP + H2O = molybdate(in) + ADP + phosphate + H(+). Functionally, part of the ABC transporter complex ModABC involved in molybdenum import. Responsible for energy coupling to the transport system. This is Molybdenum import ATP-binding protein ModC from Salmonella typhi.